The following is a 395-amino-acid chain: Membrane glycoprotein spo14 (395 aa).

Over 1–346 (MAELHLSFPA…KLEDAGVILR (346 aa)) the chain is Cytoplasmic. 2 WD repeats span residues 250–285 (MIRD…RFMS) and 290–326 (KLSQ…CLQF). A helical; Signal-anchor for type II membrane protein membrane pass occupies residues 347–367 (LSLMFPFVLAILYFYLQLLFP). Residues 368 to 395 (DEKLDAIHRFFSFILHIFSKYTIRNYDL) lie on the Lumenal side of the membrane.

Its subcellular location is the endoplasmic reticulum membrane. It is found in the golgi apparatus. The protein localises to the cis-Golgi network membrane. Functionally, required for the formation of transport vesicles from the ER. This function involves the cytoplasmic domain of the protein, which is thought to interact with the small GTP-binding protein sar1. In Schizosaccharomyces pombe (strain 972 / ATCC 24843) (Fission yeast), this protein is Membrane glycoprotein spo14 (spo14).